The chain runs to 499 residues: Glycerol kinase (499 aa).

Threonine 13 is an ADP binding site. Threonine 13, threonine 14, and serine 15 together coordinate ATP. A sn-glycerol 3-phosphate-binding site is contributed by threonine 13. Position 17 (arginine 17) interacts with ADP. Positions 83, 84, 136, and 246 each coordinate sn-glycerol 3-phosphate. Arginine 83, glutamate 84, tyrosine 136, aspartate 246, and glutamine 247 together coordinate glycerol. Residues threonine 268 and glycine 311 each contribute to the ADP site. ATP-binding residues include threonine 268, glycine 311, glutamine 315, and glycine 412. Residues glycine 412 and asparagine 416 each coordinate ADP.

It belongs to the FGGY kinase family.

The catalysed reaction is glycerol + ATP = sn-glycerol 3-phosphate + ADP + H(+). The protein operates within polyol metabolism; glycerol degradation via glycerol kinase pathway; sn-glycerol 3-phosphate from glycerol: step 1/1. Inhibited by fructose 1,6-bisphosphate (FBP). Key enzyme in the regulation of glycerol uptake and metabolism. Catalyzes the phosphorylation of glycerol to yield sn-glycerol 3-phosphate. This chain is Glycerol kinase, found in Francisella philomiragia subsp. philomiragia (strain ATCC 25017 / CCUG 19701 / FSC 153 / O#319-036).